The chain runs to 376 residues: Chaperone protein DnaJ (376 aa).

In terms of domain architecture, J spans 5 to 70 (DYYEVLGVAK…QKRAAYDQYG (66 aa)). The CR-type zinc-finger motif lies at 136–214 (GYDTQIRVPS…CHGSGKVKET (79 aa)). Residues Cys149, Cys152, Cys166, Cys169, Cys188, Cys191, Cys202, and Cys205 each coordinate Zn(2+). 4 CXXCXGXG motif repeats span residues 149–156 (CGVCHGSG), 166–173 (CPTCHGQG), 188–195 (CPKCHGTG), and 202–209 (CVHCHGSG).

This sequence belongs to the DnaJ family. As to quaternary structure, homodimer. It depends on Zn(2+) as a cofactor.

Its subcellular location is the cytoplasm. In terms of biological role, participates actively in the response to hyperosmotic and heat shock by preventing the aggregation of stress-denatured proteins and by disaggregating proteins, also in an autonomous, DnaK-independent fashion. Unfolded proteins bind initially to DnaJ; upon interaction with the DnaJ-bound protein, DnaK hydrolyzes its bound ATP, resulting in the formation of a stable complex. GrpE releases ADP from DnaK; ATP binding to DnaK triggers the release of the substrate protein, thus completing the reaction cycle. Several rounds of ATP-dependent interactions between DnaJ, DnaK and GrpE are required for fully efficient folding. Also involved, together with DnaK and GrpE, in the DNA replication of plasmids through activation of initiation proteins. This chain is Chaperone protein DnaJ, found in Burkholderia pseudomallei (strain 1710b).